The chain runs to 597 residues: Sodium/mannose cotransporter SLC5A10 (597 aa).

At 1–16 the chain is on the extracellular side; the sequence is MAVDNSTSDAHTPGRQ. An N-linked (GlcNAc...) asparagine glycan is attached at Asn5. A helical transmembrane segment spans residues 17–37; that stretch reads LTVVDIAIIAVYFALNVAVGI. Over 38–73 the chain is Cytoplasmic; that stretch reads WSSCRASRNTVRGYFLAGRDMTWWPIGASLFASSEG. Residues 74–94 traverse the membrane as a helical segment; the sequence is SGLFIGLAGSGAAGGLAVAGF. Topologically, residues 95-100 are extracellular; that stretch reads EWNATY. Asn97 carries N-linked (GlcNAc...) asparagine glycosylation. Residues 101-121 form a helical membrane-spanning segment; the sequence is VLLALAWVFVPIYLSSEIVTM. The Cytoplasmic portion of the chain corresponds to 122-139; that stretch reads PEYMQKRYGGQRIRMYLS. The helical transmembrane segment at 140–162 threads the bilayer; sequence VLSLLLSVFTKISIDLYAGALFV. At 163 to 174 the chain is on the extracellular side; the sequence is HICLGWNFYLST. A helical transmembrane segment spans residues 175–195; sequence VIMLAITALYTIAGGLTAVIY. The Cytoplasmic segment spans residues 196–201; it reads TDALQT. A helical transmembrane segment spans residues 202-222; the sequence is LVMVAGAVILTIKAFEQIGGY. The Extracellular portion of the chain corresponds to 223–265; it reads EQLAEAYAQAVPSRTISNTTCHVPRADAMHMFRDPYTADLPWT. A helical membrane pass occupies residues 266–286; sequence GMTFGLTIMAAWYWCTDQVIV. Residues 287 to 301 are Cytoplasmic-facing; sequence QRSLSARDLNHAKGG. Residues 302-322 form a helical membrane-spanning segment; the sequence is SILASYLKMLPMGLMVMPGMI. Topologically, residues 323–367 are extracellular; that stretch reads SRVLFPDDVGCVVPAECLRACGAEIGCSNIAYPKLVMELMPTGLR. The helical transmembrane segment at 368-388 threads the bilayer; sequence GLMVAVMMAALMSSLTSIFNS. Topologically, residues 389–410 are cytoplasmic; sequence SSTLFTMDIWRRLRPRAGEREL. A helical transmembrane segment spans residues 411–431; the sequence is LLVGRLVIVVLVGVSVAWIPV. Residues 432 to 444 are Extracellular-facing; the sequence is LQGSNGGQLFIYM. A helical membrane pass occupies residues 445–465; sequence QSVTSSLAPPVTAVFVLGIFW. At 466 to 472 the chain is on the cytoplasmic side; it reads RRANEQG. The chain crosses the membrane as a helical span at residues 473-493; the sequence is AFWGLMAGLAVGATRLVLEFL. Topologically, residues 494–514 are extracellular; it reads HPAPPCGHPDTRPPILHGVHY. The helical transmembrane segment at 515-535 threads the bilayer; the sequence is LHFAVALFLLSGAVVVAGSLL. Topologically, residues 536-576 are cytoplasmic; it reads TPHPQGVQIQSLTWWTLAQDLPLGVKTGDGRASQRHAFWAR. The helical transmembrane segment at 577-597 threads the bilayer; that stretch reads VCGVNAILLMCVNIFFYTYFA.

Belongs to the sodium:solute symporter (SSF) (TC 2.A.21) family. In terms of tissue distribution, predominantyl expressed in kidney. Also detected at very low levels in testes, skeletal muscle, and spleen.

It localises to the apical cell membrane. It catalyses the reaction D-mannose(out) + Na(+)(out) = D-mannose(in) + Na(+)(in). The enzyme catalyses D-fructopyranose(out) + Na(+)(out) = D-fructopyranose(in) + Na(+)(in). Electrogenic Na+-coupled sugar symporter that actively transports D-mannose or D-fructose at the plasma membrane, with a Na+ to sugar coupling ratio of 1:1. Transporter activity is driven by a transmembrane Na+ electrochemical gradient set by the Na+/K+ pump. Exclusively recognizes sugar substrates having a pyranose ring with an axial hydroxyl group on carbon 2. Has likely evolved to enable renal reabsorption of D-mannose, an important constituent of oligosaccharide chains of glycoproteins. Contributes to dietary D-fructose reabsorption from glomerular filtrate across the brush border of the kidney. The protein is Sodium/mannose cotransporter SLC5A10 (SLC5A10) of Bos taurus (Bovine).